The primary structure comprises 528 residues: Abrin-a (528 aa).

Pyrrolidone carboxylic acid is present on Gln-1. Residue Glu-164 is part of the active site. 3 disulfide bridges follow: Cys-247–Cys-269, Cys-286–Cys-305, and Cys-329–Cys-346. The Ricin B-type lectin 1 domain occupies 273 to 400 (YEPTVRIGGR…YLMRQGWRTG (128 aa)). Residues 283-325 (DGMCVDVYDNGYHNGNRIIMWKCKDRLEENQLWTLKSDKTIRS) form a 1-alpha repeat. One copy of the 1-beta repeat lies at 326–366 (NGKCLTTYGYAPGSYVMIYDCTSAVAEATYWEIWDNGTIIN). Asn-361 and Asn-401 each carry an N-linked (GlcNAc...) asparagine glycan. A 1-gamma repeat occupies 369-401 (SALVLSAESSSMGGTLTVQTNEYLMRQGWRTGN). One can recognise a Ricin B-type lectin 2 domain in the interval 403–527 (TSPFVTSISG…GKPNQIWLTL (125 aa)). Residues 414-449 (SDLCMQAQGSNVWMADCDSNKKEQQWALYTDGSIRS) form a 2-alpha repeat. 2 disulfide bridges follow: Cys-417–Cys-430 and Cys-456–Cys-473. The stretch at 453 to 492 (TNNCLTSKDHKQGSTILLMGCSNGWASQRWVFKNDGSIYS) is one 2-beta repeat. A 2-gamma repeat occupies 495–528 (DDMVMDVKGSDPSLKQIILWPYTGKPNQIWLTLF).

It in the N-terminal section; belongs to the ribosome-inactivating protein family. Type 2 RIP subfamily. Disulfide-linked dimer of A and B chains.

It carries out the reaction Endohydrolysis of the N-glycosidic bond at one specific adenosine on the 28S rRNA.. The A chain is responsible for inhibiting protein synthesis through the catalytic inactivation of 60S ribosomal subunits by removing adenine from position 4,324 of 28S rRNA. Abrin-a is more toxic than ricin. In terms of biological role, the B chain is a galactose-specific lectin that facilitates the binding of abrin to the cell membrane that precedes endocytosis. This Abrus precatorius (Indian licorice) protein is Abrin-a.